The following is a 206-amino-acid chain: Protein GrpE (206 aa).

The interval 1–36 (MTDSNGPKDNNQDQAQAAADPVVSKPYIMPDDPEDG) is disordered.

It belongs to the GrpE family. As to quaternary structure, homodimer.

Its subcellular location is the cytoplasm. Its function is as follows. Participates actively in the response to hyperosmotic and heat shock by preventing the aggregation of stress-denatured proteins, in association with DnaK and GrpE. It is the nucleotide exchange factor for DnaK and may function as a thermosensor. Unfolded proteins bind initially to DnaJ; upon interaction with the DnaJ-bound protein, DnaK hydrolyzes its bound ATP, resulting in the formation of a stable complex. GrpE releases ADP from DnaK; ATP binding to DnaK triggers the release of the substrate protein, thus completing the reaction cycle. Several rounds of ATP-dependent interactions between DnaJ, DnaK and GrpE are required for fully efficient folding. The protein is Protein GrpE of Rhodopseudomonas palustris (strain HaA2).